The chain runs to 201 residues: Protease (201 aa).

Catalysis depends on residues H55, D72, and C122.

It belongs to the peptidase C5 family. Interacts with protease cofactor pVI-C; this interaction is necessary for protease activation.

The protein localises to the virion. It is found in the host nucleus. It catalyses the reaction Cleaves proteins of the adenovirus and its host cell at two consensus sites: -Yaa-Xaa-Gly-Gly-|-Xaa- and -Yaa-Xaa-Gly-Xaa-|-Gly- (in which Yaa is Met, Ile or Leu, and Xaa is any amino acid).. Its activity is regulated as follows. Requires DNA and protease cofactor for maximal activation. Inside nascent virions, becomes partially activated by binding to the viral DNA, allowing it to cleave the cofactor that binds to the protease and fully activates it. Actin, like the viral protease cofactor, seems to act as a cofactor in the cleavage of cytokeratin 18 and of actin itself. Its function is as follows. Cleaves viral precursor proteins (pTP, pIIIa, pVI, pVII, pVIII, and pX) inside newly assembled particles giving rise to mature virions. Protease complexed to its cofactor slides along the viral DNA to specifically locate and cleave the viral precursors. Mature virions have a weakened organization compared to the unmature virions, thereby facilitating subsequent uncoating. Without maturation, the particle lacks infectivity and is unable to uncoat. Late in adenovirus infection, in the cytoplasm, may participate in the cytoskeleton destruction. Cleaves host cell cytoskeletal keratins K7 and K18. The sequence is that of Protease from Bovine adenovirus 4 (BAdV-4).